We begin with the raw amino-acid sequence, 347 residues long: NADH-ubiquinone oxidoreductase chain 2 (347 aa).

11 consecutive transmembrane segments (helical) span residues 3–23 (PLIF…VMTT), 25–45 (HWVM…PILM), 59–79 (YFLT…INLV), 96–116 (IIMT…FWVP), 122–142 (VQLS…MSIL), 149–169 (INLD…GWGG), 178–198 (IMAY…VYNP), 200–220 (MALL…MMLM), 240–260 (LTTA…LSGF), 276–296 (MIMP…YMRL), and 326–346 (LSPL…LALL).

It belongs to the complex I subunit 2 family. Core subunit of respiratory chain NADH dehydrogenase (Complex I) which is composed of 45 different subunits. Interacts with TMEM242.

Its subcellular location is the mitochondrion inner membrane. It catalyses the reaction a ubiquinone + NADH + 5 H(+)(in) = a ubiquinol + NAD(+) + 4 H(+)(out). Its function is as follows. Core subunit of the mitochondrial membrane respiratory chain NADH dehydrogenase (Complex I) which catalyzes electron transfer from NADH through the respiratory chain, using ubiquinone as an electron acceptor. Essential for the catalytic activity and assembly of complex I. In Nyctimene albiventer (Common tube-nosed fruit bat), this protein is NADH-ubiquinone oxidoreductase chain 2.